A 108-amino-acid chain; its full sequence is Ig kappa chain V-V region HP 93G7 (108 aa).

The segment at 1 to 23 (DIQMTQTTSSLSASLGDRVTISC) is framework-1. C23 and C88 form a disulfide bridge. A complementarity-determining-1 region spans residues 24–34 (RASQDISNYLN). The segment at 35 to 49 (WYQQKPDGTVKLLIY) is framework-2. The complementarity-determining-2 stretch occupies residues 50–56 (YTSRLHS). The tract at residues 57–88 (GVPSRFSGSGSGTDYSLTISNLEQEDIATYFC) is framework-3. Positions 89-97 (QQGNMLPRT) are complementarity-determining-3. The framework-4 stretch occupies residues 98–108 (FGGGTKLEIKR).

The protein is Ig kappa chain V-V region HP 93G7 of Mus musculus (Mouse).